The following is a 490-amino-acid chain: Betaine aldehyde dehydrogenase (490 aa).

Residues S26, I27, and D93 each contribute to the K(+) site. Residue 150-152 (GAW) coordinates NAD(+). K162 serves as the catalytic Charge relay system. Residues 176-179 (KPSE) and 230-233 (GVET) contribute to the NAD(+) site. L246 contributes to the K(+) binding site. E252 acts as the Proton acceptor in catalysis. The NAD(+) site is built by G254, C286, and E387. C286 serves as the catalytic Nucleophile. Position 286 is a cysteine sulfenic acid (-SOH) (C286). K(+)-binding residues include K457 and G460. E464 functions as the Charge relay system in the catalytic mechanism.

It belongs to the aldehyde dehydrogenase family. In terms of assembly, dimer of dimers. K(+) serves as cofactor.

The catalysed reaction is betaine aldehyde + NAD(+) + H2O = glycine betaine + NADH + 2 H(+). The protein operates within amine and polyamine biosynthesis; betaine biosynthesis via choline pathway; betaine from betaine aldehyde: step 1/1. Its function is as follows. Involved in the biosynthesis of the osmoprotectant glycine betaine. Catalyzes the irreversible oxidation of betaine aldehyde to the corresponding acid. The chain is Betaine aldehyde dehydrogenase from Acinetobacter baumannii (strain AB307-0294).